We begin with the raw amino-acid sequence, 281 residues long: Apolipoprotein Eb (281 aa).

An N-terminal signal peptide occupies residues 1–18 (MRSLVVFFALAVLTGCQA). Positions 19–24 (RSLFQA) are excised as a propeptide. Residues 34 to 66 (MVDRFWQYVSELNTQTDGMVQNIKGSQLSRELD) form a 3 X approximate tandem repeats region. 9 tandem repeats follow at residues 67 to 88 (TLIT…TQMT), 89 to 110 (PYAS…GKLQ), 111 to 132 (TDMT…TMME), 133 to 154 (QNAD…KRLN), 155 to 176 (KDTE…SRAS), 177 to 199 (QNAD…GATQ), 200 to 227 (KLGA…GALK), 228 to 249 (EKLE…DELT), and 254 to 281 (PYSQ…PTQA). Positions 67–281 (TLITDTMAEL…EATAALPTQA (215 aa)) are 9 X 22 AA approximate tandem repeats.

It belongs to the apolipoprotein A1/A4/E family. As to quaternary structure, homotetramer.

It is found in the secreted. The protein localises to the extracellular space. It localises to the extracellular matrix. Functionally, APOE is an apolipoprotein, a protein associating with lipid particles, that mainly functions in lipoprotein-mediated lipid transport between organs via the plasma and interstitial fluids. APOE is a core component of plasma lipoproteins and is involved in their production, conversion and clearance. Apolipoproteins are amphipathic molecules that interact both with lipids of the lipoprotein particle core and the aqueous environment of the plasma. This is Apolipoprotein Eb (apoeb) from Danio rerio (Zebrafish).